The following is a 306-amino-acid chain: Agmatinase (306 aa).

6 residues coordinate Mn(2+): histidine 126, aspartate 149, histidine 151, aspartate 153, aspartate 230, and aspartate 232.

It belongs to the arginase family. Agmatinase subfamily. The cofactor is Mn(2+).

It carries out the reaction agmatine + H2O = urea + putrescine. It participates in amine and polyamine biosynthesis; putrescine biosynthesis via agmatine pathway; putrescine from agmatine: step 1/1. Its function is as follows. Catalyzes the formation of putrescine from agmatine. In Klebsiella pneumoniae (strain 342), this protein is Agmatinase.